Consider the following 89-residue polypeptide: DNA/RNA-binding protein Alba (89 aa).

This sequence belongs to the histone-like Alba family.

The protein localises to the cytoplasm. It is found in the chromosome. In terms of biological role, binds double-stranded DNA tightly but without sequence specificity. Involved in DNA compaction. The protein is DNA/RNA-binding protein Alba of Methanococcus maripaludis (strain DSM 14266 / JCM 13030 / NBRC 101832 / S2 / LL).